Consider the following 344-residue polypeptide: MAAATELNRPSSGDRNLERRCRPNLSREVLYEIFRSLHTLVGQLDLRDDVVKITIDWNKLQSLSAFQPALLFSALEQHILYLQPFLAKLQSPIKEENTTAVEEIGRTEMGNKNEVNDKFSIGDLQEEEKHKESDLRDVKKTQIHFDPEVVQIKAGKAEIDRRISAFIERKQAEINENNVREFCNVIDCNQENSCARTDAIFTPYPGFKSHVKVSRVVNTYGPQTRPEGIPGSGHKPNSMLRDCGNQAVEERLQNIEAHLRLQTGGPVPRDIYQRIKKLEDKILELEGISPEYFQSVSFSGKRRKVQPPQQNYSLAELDEKISALKQALLRKSREAESMATHHLP.

A Phosphoserine modification is found at Ser91. Residues Lys94, Lys118, Lys129, Lys139, Lys153, and Lys235 each participate in a glycyl lysine isopeptide (Lys-Gly) (interchain with G-Cter in SUMO2) cross-link. Residues 172–344 (AEINENNVRE…AESMATHHLP (173 aa)) form an interaction with MAP3K12 region. The segment at 271 to 285 (IYQRIKKLEDKILEL) is leucine-zipper 1. An N6-acetyllysine; alternate modification is found at Lys301. A Glycyl lysine isopeptide (Lys-Gly) (interchain with G-Cter in SUMO2); alternate cross-link involves residue Lys301. Residues Lys304 and Lys325 each participate in a glycyl lysine isopeptide (Lys-Gly) (interchain with G-Cter in SUMO2) cross-link. Residues 314 to 329 (LAELDEKISALKQALL) are leucine-zipper 2.

Component of the ADA2A-containing complex (ATAC), composed of KAT14, KAT2A, TADA2L, TADA3L, ZZ3, MBIP, WDR5, YEATS2, CCDC101 and DR1. In the complex, it probably interacts directly with KAT2A, KAT14 and WDR5. As to expression, ubiquitous. High expression seen in the heart and lung.

The protein localises to the nucleus. The protein resides in the cytoplasm. In terms of biological role, inhibits the MAP3K12 activity to induce the activation of the JNK/SAPK pathway. Component of the ATAC complex, a complex with histone acetyltransferase activity on histones H3 and H4. The sequence is that of MAP3K12-binding inhibitory protein 1 (MBIP) from Homo sapiens (Human).